We begin with the raw amino-acid sequence, 335 residues long: Phospho-N-acetylmuramoyl-pentapeptide-transferase (335 aa).

10 consecutive transmembrane segments (helical) span residues 3 to 23 (LTIL…PHFI), 53 to 73 (GGTV…LVYF), 78 to 98 (SLGL…IGFL), 118 to 138 (FTLQ…PSGI), 143 to 163 (VFGY…FWVV), 174 to 194 (GIDG…GVIA), 200 to 220 (FDVL…FLFN), 226 to 246 (IFMG…ISIA), 251 to 271 (WTLL…MLQV), and 314 to 334 (VDAF…AILY).

Belongs to the glycosyltransferase 4 family. MraY subfamily. Requires Mg(2+) as cofactor.

The protein resides in the cell membrane. It catalyses the reaction UDP-N-acetyl-alpha-D-muramoyl-L-alanyl-gamma-D-glutamyl-L-lysyl-D-alanyl-D-alanine + di-trans,octa-cis-undecaprenyl phosphate = Mur2Ac(oyl-L-Ala-gamma-D-Glu-L-Lys-D-Ala-D-Ala)-di-trans,octa-cis-undecaprenyl diphosphate + UMP. It functions in the pathway cell wall biogenesis; peptidoglycan biosynthesis. Its function is as follows. Catalyzes the initial step of the lipid cycle reactions in the biosynthesis of the cell wall peptidoglycan: transfers peptidoglycan precursor phospho-MurNAc-pentapeptide from UDP-MurNAc-pentapeptide onto the lipid carrier undecaprenyl phosphate, yielding undecaprenyl-pyrophosphoryl-MurNAc-pentapeptide, known as lipid I. The sequence is that of Phospho-N-acetylmuramoyl-pentapeptide-transferase from Streptococcus equi subsp. zooepidemicus (strain MGCS10565).